The sequence spans 343 residues: Methionine import ATP-binding protein MetN 1 (343 aa).

Residues 2–241 (IKLSNITKVF…PKTPLAQKFI (240 aa)) enclose the ABC transporter domain. ATP is bound at residue 38–45 (GASGAGKS).

Belongs to the ABC transporter superfamily. Methionine importer (TC 3.A.1.24) family. In terms of assembly, the complex is composed of two ATP-binding proteins (MetN), two transmembrane proteins (MetI) and a solute-binding protein (MetQ).

The protein resides in the cell inner membrane. The enzyme catalyses L-methionine(out) + ATP + H2O = L-methionine(in) + ADP + phosphate + H(+). It carries out the reaction D-methionine(out) + ATP + H2O = D-methionine(in) + ADP + phosphate + H(+). Functionally, part of the ABC transporter complex MetNIQ involved in methionine import. Responsible for energy coupling to the transport system. The polypeptide is Methionine import ATP-binding protein MetN 1 (Salmonella typhimurium (strain LT2 / SGSC1412 / ATCC 700720)).